We begin with the raw amino-acid sequence, 218 residues long: MSSDGYPAPIFRGRRRGVLLALSSPSGAGKTTLSKRLLSQNPDVVLSVSATTRKPRPGEVDGQDYHFISVDEFKKKIEDDEFFEWAEVFGRYYGTPKTPVMEAVEDGRDVVFDIDWQGAQALAAAAPDDAVRVFILPPSLALLEDRLRKRGQDTTEIIKDRMARAKDEISHWHEYDYVIVNDDFARALEKLNEILHAERLKRLRHPWLEEFVDAIMEQ.

In terms of domain architecture, Guanylate kinase-like spans 17-196 (GVLLALSSPS…ALEKLNEILH (180 aa)). 24–31 (SPSGAGKT) contributes to the ATP binding site.

This sequence belongs to the guanylate kinase family.

Its subcellular location is the cytoplasm. It carries out the reaction GMP + ATP = GDP + ADP. Its function is as follows. Essential for recycling GMP and indirectly, cGMP. The sequence is that of Guanylate kinase from Maricaulis maris (strain MCS10) (Caulobacter maris).